Here is a 104-residue protein sequence, read N- to C-terminus: MIPGEIIVAEGDITLNADRDAITLNVANLGDRPIQVGSHYHFAETNAALSFDRAATLGRRLDIAAGTAVRFEPGQTREVALVPFAGAREVFGFSGAVMGKLDKD.

This sequence belongs to the urease beta subunit family. As to quaternary structure, heterotrimer of UreA (gamma), UreB (beta) and UreC (alpha) subunits. Three heterotrimers associate to form the active enzyme.

It localises to the cytoplasm. The catalysed reaction is urea + 2 H2O + H(+) = hydrogencarbonate + 2 NH4(+). The protein operates within nitrogen metabolism; urea degradation; CO(2) and NH(3) from urea (urease route): step 1/1. The sequence is that of Urease subunit beta from Methylocella silvestris (strain DSM 15510 / CIP 108128 / LMG 27833 / NCIMB 13906 / BL2).